The primary structure comprises 1939 residues: Myosin-8 (1939 aa).

Residues 35–84 form the Myosin N-terminal SH3-like domain; sequence DAKTSVFVAEPKASYVKSTIQSKEGGKVTVKTEGGATLTVREDQVFPMNP. Phosphothreonine is present on residues Thr-66 and Thr-71. The region spanning 88 to 783 is the Myosin motor domain; the sequence is DKIEDMAMMT…LLGLLEEMRD (696 aa). The residue at position 132 (Lys-132) is an N6,N6,N6-trimethyllysine. 181-188 is a binding site for ATP; the sequence is GESGAGKT. Tyr-391 is subject to Phosphotyrosine. Thr-421 is modified (phosphothreonine). Residue Tyr-426 is modified to Phosphotyrosine. Ser-627 bears the Phosphoserine mark. The actin-binding stretch occupies residues 660 to 682; that stretch reads LNKLMTNLRSTHPHFVRCIIPNE. The residue at position 758 (His-758) is a Pros-methylhistidine. Residues 762-776 are actin-binding; the sequence is KFGHTKVFFKAGLLG. The IQ domain occupies 783-815; that stretch reads DEKLSQIITRTQAVCRGFLMRVEYQKMLQRREA. Positions 844 to 1939 form a coiled coil; sequence LLKSAETEKE…REVHTKISAE (1096 aa). Phosphoserine is present on residues Ser-1093, Ser-1097, Ser-1163, and Ser-1238. Thr-1242 is modified (phosphothreonine). Ser-1244 carries the phosphoserine modification. Thr-1256 carries the post-translational modification Phosphothreonine. Ser-1262 is modified (phosphoserine). Phosphothreonine is present on residues Thr-1266 and Thr-1287. 3 positions are modified to phosphoserine: Ser-1293, Ser-1304, and Ser-1307. Tyr-1465 bears the Phosphotyrosine mark. A Phosphothreonine modification is found at Thr-1468. A Phosphoserine modification is found at Ser-1475. A Phosphotyrosine modification is found at Tyr-1493. The residue at position 1496 (Ser-1496) is a Phosphoserine. Position 1502 is a phosphothreonine (Thr-1502). A Phosphoserine modification is found at Ser-1515. Thr-1518 is modified (phosphothreonine). 6 positions are modified to phosphoserine: Ser-1555, Ser-1575, Ser-1601, Ser-1604, Ser-1715, and Ser-1727. Thr-1731 carries the phosphothreonine modification. A Phosphoserine modification is found at Ser-1740.

Belongs to the TRAFAC class myosin-kinesin ATPase superfamily. Myosin family. As to quaternary structure, muscle myosin is a hexameric protein that consists of 2 heavy chain subunits (MHC), 2 alkali light chain subunits (MLC) and 2 regulatory light chain subunits (MLC-2).

Its subcellular location is the cytoplasm. It is found in the myofibril. Functionally, muscle contraction. The chain is Myosin-8 (MYH8) from Canis lupus familiaris (Dog).